The primary structure comprises 189 residues: UPF0312 protein VIBHAR_05924 (189 aa).

Positions 1–22 (MKKSLFATGLAIAIALPFGANA) are cleaved as a signal peptide.

It belongs to the UPF0312 family. Type 1 subfamily.

Its subcellular location is the periplasm. The sequence is that of UPF0312 protein VIBHAR_05924 from Vibrio campbellii (strain ATCC BAA-1116).